An 81-amino-acid polypeptide reads, in one-letter code: Small ribosomal subunit protein bS16 (81 aa).

Belongs to the bacterial ribosomal protein bS16 family.

This is Small ribosomal subunit protein bS16 from Alkaliphilus oremlandii (strain OhILAs) (Clostridium oremlandii (strain OhILAs)).